Reading from the N-terminus, the 331-residue chain is Putative peptidyl-prolyl cis-trans isomerase RC0542 (331 aa).

The tract at residues 33–54 (EQTASNNSSTDENQTSINNEPP) is disordered. Positions 128-226 (GHVVTVFYQI…SNEVKIYDDE (99 aa)) constitute a PPIase FKBP-type domain.

The catalysed reaction is [protein]-peptidylproline (omega=180) = [protein]-peptidylproline (omega=0). In Rickettsia conorii (strain ATCC VR-613 / Malish 7), this protein is Putative peptidyl-prolyl cis-trans isomerase RC0542.